A 681-amino-acid chain; its full sequence is Proline dehydrogenase 1, mitochondrial (681 aa).

The N-terminal 30 residues, 1-30 (MALLRSLSAQRTAISLVYGRNSSKSSNSVA), are a transit peptide targeting the mitochondrion. The segment covering 76–87 (STLVQPEVVSSE) has biased composition (polar residues). 2 disordered regions span residues 76–113 (STLV…QRDP) and 216–239 (EEAE…EGSM). Residues 88-99 (TVKRSMKQESSQ) show a composition bias toward basic and acidic residues.

Belongs to the proline oxidase family. Requires FAD as cofactor. In terms of tissue distribution, most abundant in developing nervous system.

It is found in the mitochondrion matrix. It carries out the reaction L-proline + a quinone = (S)-1-pyrroline-5-carboxylate + a quinol + H(+). Its pathway is amino-acid degradation; L-proline degradation into L-glutamate; L-glutamate from L-proline: step 1/2. Functionally, converts proline to delta-1-pyrroline-5-carboxylate. Involved in the conversion of proline to glutamate, which functions as a transmitter at neuromuscular junctions. Glutamate deficiency could possibly account for reduced motor activity. The sequence is that of Proline dehydrogenase 1, mitochondrial (slgA) from Drosophila melanogaster (Fruit fly).